A 277-amino-acid polypeptide reads, in one-letter code: Thymidylate synthase (277 aa).

A dUMP-binding site is contributed by Arg-21. His-51 is a binding site for (6R)-5,10-methylene-5,6,7,8-tetrahydrofolate. DUMP is bound at residue 126–127 (RR). The active-site Nucleophile is Cys-159. Residues 179–182 (RSAD), Asn-190, and 220–222 (HLY) contribute to the dUMP site. Asp-182 is a binding site for (6R)-5,10-methylene-5,6,7,8-tetrahydrofolate. Ser-276 serves as a coordination point for (6R)-5,10-methylene-5,6,7,8-tetrahydrofolate.

The protein belongs to the thymidylate synthase family. Bacterial-type ThyA subfamily. As to quaternary structure, homodimer.

It is found in the cytoplasm. It catalyses the reaction dUMP + (6R)-5,10-methylene-5,6,7,8-tetrahydrofolate = 7,8-dihydrofolate + dTMP. The protein operates within pyrimidine metabolism; dTTP biosynthesis. Functionally, catalyzes the reductive methylation of 2'-deoxyuridine-5'-monophosphate (dUMP) to 2'-deoxythymidine-5'-monophosphate (dTMP) while utilizing 5,10-methylenetetrahydrofolate (mTHF) as the methyl donor and reductant in the reaction, yielding dihydrofolate (DHF) as a by-product. This enzymatic reaction provides an intracellular de novo source of dTMP, an essential precursor for DNA biosynthesis. In Teredinibacter turnerae (strain ATCC 39867 / T7901), this protein is Thymidylate synthase.